A 167-amino-acid chain; its full sequence is Cofilin-2 (167 aa).

Positions 4–153 constitute an ADF-H domain; it reads GVTVNDEVIK…KDRCTLADKL (150 aa). Positions 30–34 match the Nuclear localization signal motif; sequence KKRKK.

Belongs to the actin-binding proteins ADF family.

It is found in the nucleus matrix. Its subcellular location is the cytoplasm. It localises to the cytoskeleton. Its function is as follows. Controls reversibly actin polymerization and depolymerization in a pH-sensitive manner. It has the ability to bind G- and F-actin in a 1:1 ratio of cofilin to actin. It is the major component of intranuclear and cytoplasmic actin rods. This is Cofilin-2 (cfl2) from Xenopus tropicalis (Western clawed frog).